A 604-amino-acid chain; its full sequence is Asparagine synthetase [glutamine-hydrolyzing] 1 (604 aa).

The active-site Nucleophile is Cys2. The 185-residue stretch at 2–186 (CGILAVLGAA…PGHLYSSAAG (185 aa)) folds into the Glutamine amidotransferase type-2 domain. Residues 50–54 (RLAIV), 75–77 (NGE), and Asp99 contribute to the L-glutamine site. The 241-residue stretch at 211 to 451 (LREAFEKAVI…LPKHILYRQK (241 aa)) folds into the Asparagine synthetase domain. Residues Leu232, Val268, and 342-343 (SG) each bind ATP.

It carries out the reaction L-aspartate + L-glutamine + ATP + H2O = L-asparagine + L-glutamate + AMP + diphosphate + H(+). It functions in the pathway amino-acid biosynthesis; L-asparagine biosynthesis. Its function is as follows. Essential for nitrogen assimilation, distribution and remobilization within the plant via the phloem. This Oryza sativa subsp. japonica (Rice) protein is Asparagine synthetase [glutamine-hydrolyzing] 1.